The primary structure comprises 396 residues: S-adenosylmethionine decarboxylase proenzyme (396 aa).

Residues Glu-29 and Glu-32 contribute to the active site. Ser-88 acts as the Schiff-base intermediate with substrate; via pyruvic acid in catalysis. A Pyruvic acid (Ser); by autocatalysis modification is found at Ser-88. The active-site Proton donor; for catalytic activity is the Cys-102. Catalysis depends on proton acceptor; for processing activity residues Ser-287 and His-301.

The protein belongs to the eukaryotic AdoMetDC family. Requires pyruvate as cofactor. In terms of processing, is synthesized initially as an inactive proenzyme. Formation of the active enzyme involves a self-maturation process in which the active site pyruvoyl group is generated from an internal serine residue via an autocatalytic post-translational modification. Two non-identical subunits are generated from the proenzyme in this reaction, and the pyruvate is formed at the N-terminus of the alpha chain, which is derived from the carboxyl end of the proenzyme. The post-translation cleavage follows an unusual pathway, termed non-hydrolytic serinolysis, in which the side chain hydroxyl group of the serine supplies its oxygen atom to form the C-terminus of the beta chain, while the remainder of the serine residue undergoes an oxidative deamination to produce ammonia and the pyruvoyl group blocking the N-terminus of the alpha chain.

It carries out the reaction S-adenosyl-L-methionine + H(+) = S-adenosyl 3-(methylsulfanyl)propylamine + CO2. It participates in amine and polyamine biosynthesis; S-adenosylmethioninamine biosynthesis; S-adenosylmethioninamine from S-adenosyl-L-methionine: step 1/1. Functionally, catalyzes the decarboxylation of S-adenosylmethionine, a key step in the biosynthetic pathway for spermidine and spermine. It is essential for normal growth, sporulation, and maintenance of ds-RNA virus. The chain is S-adenosylmethionine decarboxylase proenzyme (SPE2) from Saccharomyces cerevisiae (strain ATCC 204508 / S288c) (Baker's yeast).